Consider the following 150-residue polypeptide: SsrA-binding protein (150 aa).

This sequence belongs to the SmpB family.

The protein localises to the cytoplasm. Functionally, required for rescue of stalled ribosomes mediated by trans-translation. Binds to transfer-messenger RNA (tmRNA), required for stable association of tmRNA with ribosomes. tmRNA and SmpB together mimic tRNA shape, replacing the anticodon stem-loop with SmpB. tmRNA is encoded by the ssrA gene; the 2 termini fold to resemble tRNA(Ala) and it encodes a 'tag peptide', a short internal open reading frame. During trans-translation Ala-aminoacylated tmRNA acts like a tRNA, entering the A-site of stalled ribosomes, displacing the stalled mRNA. The ribosome then switches to translate the ORF on the tmRNA; the nascent peptide is terminated with the 'tag peptide' encoded by the tmRNA and targeted for degradation. The ribosome is freed to recommence translation, which seems to be the essential function of trans-translation. The chain is SsrA-binding protein from Borreliella afzelii (strain PKo) (Borrelia afzelii).